Reading from the N-terminus, the 211-residue chain is Uracil phosphoribosyltransferase (211 aa).

Residues Arg78, Arg103, and 130 to 138 (DPMLATGNS) each bind 5-phospho-alpha-D-ribose 1-diphosphate. Residues Ile193 and 198–200 (GDA) contribute to the uracil site. Position 199 (Asp199) interacts with 5-phospho-alpha-D-ribose 1-diphosphate.

Belongs to the UPRTase family. Requires Mg(2+) as cofactor.

It carries out the reaction UMP + diphosphate = 5-phospho-alpha-D-ribose 1-diphosphate + uracil. It functions in the pathway pyrimidine metabolism; UMP biosynthesis via salvage pathway; UMP from uracil: step 1/1. Its activity is regulated as follows. Allosterically activated by GTP. Catalyzes the conversion of uracil and 5-phospho-alpha-D-ribose 1-diphosphate (PRPP) to UMP and diphosphate. The sequence is that of Uracil phosphoribosyltransferase from Acinetobacter baumannii (strain AB307-0294).